The following is a 279-amino-acid chain: Phosphatidylglycerol--prolipoprotein diacylglyceryl transferase (279 aa).

Helical transmembrane passes span 14 to 34 (IAFS…ACAI), 62 to 82 (YFLW…ILIY), 106 to 126 (FVGI…IASY), 136 to 156 (LLIY…FGRI), 190 to 210 (PSQL…VMWA), 218 to 238 (GLLI…AEFY), and 252 to 272 (LSMG…ILLY). R155 serves as a coordination point for a 1,2-diacyl-sn-glycero-3-phospho-(1'-sn-glycerol).

It belongs to the Lgt family.

It localises to the cell inner membrane. The catalysed reaction is L-cysteinyl-[prolipoprotein] + a 1,2-diacyl-sn-glycero-3-phospho-(1'-sn-glycerol) = an S-1,2-diacyl-sn-glyceryl-L-cysteinyl-[prolipoprotein] + sn-glycerol 1-phosphate + H(+). It functions in the pathway protein modification; lipoprotein biosynthesis (diacylglyceryl transfer). Its function is as follows. Catalyzes the transfer of the diacylglyceryl group from phosphatidylglycerol to the sulfhydryl group of the N-terminal cysteine of a prolipoprotein, the first step in the formation of mature lipoproteins. This chain is Phosphatidylglycerol--prolipoprotein diacylglyceryl transferase, found in Helicobacter pylori (strain HPAG1).